Here is a 279-residue protein sequence, read N- to C-terminus: Topoisomerase I damage affected protein 4 (279 aa).

The Extracellular segment spans residues 1-32; sequence MNANSTTTAIGLTSPFEKLSFFPHSSNLILAH. A helical membrane pass occupies residues 33–53; sequence LHEIIFSFVFYQLAFSVVAPF. Topologically, residues 54–79 are cytoplasmic; sequence LNKVVFRKHYTTIRDPLLKIDFNVHT. Residues 70-271 form the TLC domain; it reads LLKIDFNVHT…MIRIAKKLAK (202 aa). Residues 80–100 form a helical membrane-spanning segment; sequence VSMIQAVVSNTVLLPTLTTPM. The Extracellular portion of the chain corresponds to 101–110; it reads HYNVVTYTDS. The helical transmembrane segment at 111–131 threads the bilayer; that stretch reads YSSMVSSLSAGYFIWDLTMCV. Residues 132 to 135 lie on the Cytoplasmic side of the membrane; that stretch reads RYFK. The chain crosses the membrane as a helical span at residues 136–156; it reads LYGLEFTGHAIGSVYVMLLSL. The Extracellular portion of the chain corresponds to 157–162; it reads RPFCQP. Residues 163–183 form a helical membrane-spanning segment; that stretch reads WIGRFLIYEASTPFVNINWFI. At 184 to 192 the chain is on the cytoplasmic side; that stretch reads MQCNAKSKN. Residues 193-213 form a helical membrane-spanning segment; it reads SIPLWFNVVNGLLLMTVFFVV. Residues 214–238 are Extracellular-facing; it reads RICWGSIASALLFRQMWKVRDELPK. The helical transmembrane segment at 239 to 259 threads the bilayer; sequence FSAVTMMSLNIFMNLLNVLWF. Topologically, residues 260–279 are cytoplasmic; it reads KKMIRIAKKLAKPAPTSKLD.

Belongs to the TMEM56 family.

The protein localises to the membrane. The polypeptide is Topoisomerase I damage affected protein 4 (TDA4) (Saccharomyces cerevisiae (strain ATCC 204508 / S288c) (Baker's yeast)).